A 622-amino-acid polypeptide reads, in one-letter code: FERM domain-containing protein 6 (622 aa).

The FERM domain maps to 16 to 328 (RSVCIFLPND…NSHRLYMNLQ (313 aa)). A disordered region spans residues 364–445 (KRSRASGSSA…SGVESGGKDR (82 aa)). Composition is skewed to low complexity over residues 384-395 (HSTASHSSSHTS) and 425-438 (SSMTSHGSSHTSGV). Ser522 is modified (phosphoserine). A Phosphothreonine modification is found at Thr523. Phosphoserine occurs at positions 525, 542, and 544.

The protein resides in the cytoplasm. It localises to the cell membrane. This chain is FERM domain-containing protein 6 (FRMD6), found in Homo sapiens (Human).